The primary structure comprises 309 residues: HPr kinase/phosphorylase (309 aa).

Active-site residues include His-138 and Lys-159. An ATP-binding site is contributed by Gly-153–Ser-160. A Mg(2+)-binding site is contributed by Ser-160. Asp-177 (proton acceptor; for phosphorylation activity. Proton donor; for dephosphorylation activity) is an active-site residue. The interval Ile-201–Asp-210 is important for the catalytic mechanism of both phosphorylation and dephosphorylation. Residue Glu-202 coordinates Mg(2+). Arg-243 is a catalytic residue. Residues Pro-264–Arg-269 form an important for the catalytic mechanism of dephosphorylation region.

Belongs to the HPrK/P family. As to quaternary structure, homohexamer. It depends on Mg(2+) as a cofactor.

It catalyses the reaction [HPr protein]-L-serine + ATP = [HPr protein]-O-phospho-L-serine + ADP + H(+). It carries out the reaction [HPr protein]-O-phospho-L-serine + phosphate + H(+) = [HPr protein]-L-serine + diphosphate. In terms of biological role, catalyzes the ATP- as well as the pyrophosphate-dependent phosphorylation of a specific serine residue in HPr, a phosphocarrier protein of the phosphoenolpyruvate-dependent sugar phosphotransferase system (PTS). HprK/P also catalyzes the pyrophosphate-producing, inorganic phosphate-dependent dephosphorylation (phosphorolysis) of seryl-phosphorylated HPr (P-Ser-HPr). The two antagonistic activities of HprK/P are regulated by several intracellular metabolites, which change their concentration in response to the absence or presence of rapidly metabolisable carbon sources (glucose, fructose, etc.) in the growth medium. Therefore, by controlling the phosphorylation state of HPr, HPrK/P is a sensor enzyme that plays a major role in the regulation of carbon metabolism and sugar transport: it mediates carbon catabolite repression (CCR), and regulates PTS-catalyzed carbohydrate uptake and inducer exclusion. The protein is HPr kinase/phosphorylase of Alkaliphilus metalliredigens (strain QYMF).